We begin with the raw amino-acid sequence, 167 residues long: Probable phospholipid hydroperoxide glutathione peroxidase (167 aa).

Cys-41 is an active-site residue.

This sequence belongs to the glutathione peroxidase family.

The protein localises to the cytoplasm. The enzyme catalyses a hydroperoxy polyunsaturated fatty acid + 2 glutathione = a hydroxy polyunsaturated fatty acid + glutathione disulfide + H2O. Its function is as follows. Protects cells and enzymes from oxidative damage, by catalyzing the reduction of hydrogen peroxide, lipid peroxides and organic hydroperoxide, by glutathione. The polypeptide is Probable phospholipid hydroperoxide glutathione peroxidase (CSA) (Citrus sinensis (Sweet orange)).